Consider the following 456-residue polypeptide: Bifunctional protein GlmU (456 aa).

A pyrophosphorylase region spans residues 1–228; that stretch reads MKLKAIILAA…YEDIMAVNSR (228 aa). UDP-N-acetyl-alpha-D-glucosamine-binding positions include 8-11, Lys-22, Gln-72, 77-78, 99-101, Gly-138, Glu-153, Asn-168, and Asn-226; these read LAAG, GT, and YGD. Mg(2+) is bound at residue Asp-101. Residue Asn-226 participates in Mg(2+) binding. The tract at residues 229-249 is linker; it reads EQLAEVEEVMQRRIVKKHMEA. Residues 250–456 are N-acetyltransferase; the sequence is GVTFIDPQST…WVARKGVGKK (207 aa). Residues Arg-331 and Lys-349 each coordinate UDP-N-acetyl-alpha-D-glucosamine. His-361 functions as the Proton acceptor in the catalytic mechanism. Tyr-364 and Asn-375 together coordinate UDP-N-acetyl-alpha-D-glucosamine. Acetyl-CoA-binding positions include 384-385, Ser-403, Ser-421, and Arg-438; that span reads NY.

In the N-terminal section; belongs to the N-acetylglucosamine-1-phosphate uridyltransferase family. The protein in the C-terminal section; belongs to the transferase hexapeptide repeat family. In terms of assembly, homotrimer. Mg(2+) is required as a cofactor.

Its subcellular location is the cytoplasm. It catalyses the reaction alpha-D-glucosamine 1-phosphate + acetyl-CoA = N-acetyl-alpha-D-glucosamine 1-phosphate + CoA + H(+). It carries out the reaction N-acetyl-alpha-D-glucosamine 1-phosphate + UTP + H(+) = UDP-N-acetyl-alpha-D-glucosamine + diphosphate. It functions in the pathway nucleotide-sugar biosynthesis; UDP-N-acetyl-alpha-D-glucosamine biosynthesis; N-acetyl-alpha-D-glucosamine 1-phosphate from alpha-D-glucosamine 6-phosphate (route II): step 2/2. It participates in nucleotide-sugar biosynthesis; UDP-N-acetyl-alpha-D-glucosamine biosynthesis; UDP-N-acetyl-alpha-D-glucosamine from N-acetyl-alpha-D-glucosamine 1-phosphate: step 1/1. The protein operates within bacterial outer membrane biogenesis; LPS lipid A biosynthesis. Functionally, catalyzes the last two sequential reactions in the de novo biosynthetic pathway for UDP-N-acetylglucosamine (UDP-GlcNAc). The C-terminal domain catalyzes the transfer of acetyl group from acetyl coenzyme A to glucosamine-1-phosphate (GlcN-1-P) to produce N-acetylglucosamine-1-phosphate (GlcNAc-1-P), which is converted into UDP-GlcNAc by the transfer of uridine 5-monophosphate (from uridine 5-triphosphate), a reaction catalyzed by the N-terminal domain. The polypeptide is Bifunctional protein GlmU (Alkaliphilus metalliredigens (strain QYMF)).